A 385-amino-acid chain; its full sequence is Zinc cluster transcription factor CZF1 (385 aa).

Residues 1–19 show a composition bias toward polar residues; that stretch reads MSSIPNINWNDPNNGKSNT. Disordered regions lie at residues 1-117, 154-216, and 233-308; these read MSSI…QQPL, LQQR…QQWD, and SSIQ…KPIT. Residues 20–38 are compositionally biased toward low complexity; it reads SRQSQPQPQLPSNVSPPNS. Polar residues-rich tracts occupy residues 52-67 and 88-97; these read YGSS…NPNT and YPVQQTAQQR. Low complexity-rich tracts occupy residues 102–117 and 154–169; these read LQQV…QQPL and LQQR…KSQL. The segment covering 170–200 has biased composition (polar residues); it reads NEQNAMMSASTQQYPVQDFTNPYPNAQNPAE. Low complexity-rich tracts occupy residues 201–214 and 233–256; these read QQQQ…QSQQ and SSIQ…KQQQ. Positions 265–275 are enriched in basic residues; sequence KKKPGRKPKLR. Positions 279 to 291 are enriched in polar residues; that stretch reads ESSSETPQVPKTA. The zn(2)-C6 fungal-type DNA-binding region spans 315–342; that stretch reads CLTCRQRKKRCCETRPRCTECTRLRLNC. Residues 345-364 form a disordered region; it reads PKPGTEHKNKPKDQKDDENT. Residues 348 to 364 are compositionally biased toward basic and acidic residues; it reads GTEHKNKPKDQKDDENT.

In terms of assembly, interacts with EFG1.

The protein localises to the nucleus. Its function is as follows. Transcriptional regulator of the switch between 2 heritable states, the white and opaque states. These 2 cell types differ in many characteristics, including cell structure, mating competence, and virulence. Each state is heritable for many generations, and switching between states occurs stochastically, at low frequency. Contributes to formation of the opaque state, but is not necessary for heritability of the opaque state. Plays a role in cell adhesion and pseudohyphal growth. Involved in acquisition of drug resistance and acts as a repressor of beta-glucan synthesis, thus negatively regulating cell wall integrity. Plays a role in adherence, invasion and damage to oral epithelial cells. The chain is Zinc cluster transcription factor CZF1 (CZF1) from Candida albicans (strain SC5314 / ATCC MYA-2876) (Yeast).